A 249-amino-acid chain; its full sequence is MRPKIVVGNWKLHGSHAFAQALVAQVAAGLPLPGVSVIILPPLLYLSDLTQRFKGEGLAFGAQNVSHHDKGAYTGEVSAAMVADVGAHYTLVGHSERREYHHEDSELVARKFAAALSAGLRPILCVGESLPQREAGQAEVAIAMQLAPVLALVGPQGVARGLIAYEPVWAIGTGRHADPSQVQAMHAFIRGEIARQDARIGDSLLILYGGGIKPCNAAELFSQQDVDGGLIGGASLVADDFLAIARATV.

Asn-9–Lys-11 is a binding site for substrate. Catalysis depends on His-94, which acts as the Electrophile. The active-site Proton acceptor is the Glu-166. Residues Gly-172 and Gly-232–Gly-233 each bind substrate.

It belongs to the triosephosphate isomerase family. Homodimer.

Its subcellular location is the cytoplasm. It catalyses the reaction D-glyceraldehyde 3-phosphate = dihydroxyacetone phosphate. Its pathway is carbohydrate biosynthesis; gluconeogenesis. It functions in the pathway carbohydrate degradation; glycolysis; D-glyceraldehyde 3-phosphate from glycerone phosphate: step 1/1. Its function is as follows. Involved in the gluconeogenesis. Catalyzes stereospecifically the conversion of dihydroxyacetone phosphate (DHAP) to D-glyceraldehyde-3-phosphate (G3P). This chain is Triosephosphate isomerase, found in Xylella fastidiosa (strain M12).